We begin with the raw amino-acid sequence, 574 residues long: Proline--tRNA ligase (574 aa).

The protein belongs to the class-II aminoacyl-tRNA synthetase family. ProS type 1 subfamily. In terms of assembly, homodimer.

The protein resides in the cytoplasm. It carries out the reaction tRNA(Pro) + L-proline + ATP = L-prolyl-tRNA(Pro) + AMP + diphosphate. Its function is as follows. Catalyzes the attachment of proline to tRNA(Pro) in a two-step reaction: proline is first activated by ATP to form Pro-AMP and then transferred to the acceptor end of tRNA(Pro). As ProRS can inadvertently accommodate and process non-cognate amino acids such as alanine and cysteine, to avoid such errors it has two additional distinct editing activities against alanine. One activity is designated as 'pretransfer' editing and involves the tRNA(Pro)-independent hydrolysis of activated Ala-AMP. The other activity is designated 'posttransfer' editing and involves deacylation of mischarged Ala-tRNA(Pro). The misacylated Cys-tRNA(Pro) is not edited by ProRS. This Nautilia profundicola (strain ATCC BAA-1463 / DSM 18972 / AmH) protein is Proline--tRNA ligase.